The following is a 276-amino-acid chain: NADH-cytochrome b5 reductase 2 (276 aa).

Positions 15–127 (EAKYPLPLIE…RGPTGRLFYN (113 aa)) constitute an FAD-binding FR-type domain. At K17 the chain carries N6-acetyllysine. Position 18 is a phosphotyrosine (Y18). Residues 107–137 (ENMKIGDTILFRGPTGRLFYNEPGTLLIKAN) and 146–181 (LVHHLGMIAGGTGITPMLQLIRHITKDTSDETRMSL) each bind FAD.

It belongs to the flavoprotein pyridine nucleotide cytochrome reductase family. The cofactor is FAD.

The catalysed reaction is 2 Fe(III)-[cytochrome b5] + NADH = 2 Fe(II)-[cytochrome b5] + NAD(+) + H(+). NADH-cytochrome b5 reductases are involved in desaturation and elongation of fatty acids, cholesterol biosynthesis, drug metabolism, and, in erythrocyte, methemoglobin reduction. Responsible for NADH-dependent lucigenin chemiluminescence in spermatozoa by reducing both lucigenin and 2-[4-iodophenyl]-3-[4-nitrophenyl]-5-[2,4-disulfophenyl]-2H tetrazolium monosodium salt (WST-1). This chain is NADH-cytochrome b5 reductase 2 (Cyb5r2), found in Mus musculus (Mouse).